Reading from the N-terminus, the 796-residue chain is Phenylalanine--tRNA ligase beta subunit (796 aa).

Residues 39–149 (SAALKSFRVA…GDAPLGTTFA (111 aa)) form the tRNA-binding domain. Residues 398–470 (LARKALAYDP…RVHGLDAVPS (73 aa)) form the B5 domain. 4 residues coordinate Mg(2+): Asp-448, Asp-454, Glu-457, and Glu-458. One can recognise an FDX-ACB domain in the interval 703-795 (PALQAVTRDF…AAGKLGAELR (93 aa)).

It belongs to the phenylalanyl-tRNA synthetase beta subunit family. Type 1 subfamily. As to quaternary structure, tetramer of two alpha and two beta subunits. Requires Mg(2+) as cofactor.

Its subcellular location is the cytoplasm. It catalyses the reaction tRNA(Phe) + L-phenylalanine + ATP = L-phenylalanyl-tRNA(Phe) + AMP + diphosphate + H(+). The polypeptide is Phenylalanine--tRNA ligase beta subunit (Novosphingobium aromaticivorans (strain ATCC 700278 / DSM 12444 / CCUG 56034 / CIP 105152 / NBRC 16084 / F199)).